The primary structure comprises 80 residues: Gamma-conotoxin PnVIIA (80 aa).

Positions M1–A19 are cleaved as a signal peptide. The propeptide occupies Q20–W43. 3 cysteine pairs are disulfide-bonded: C47–C61, C54–C65, and C60–C70. E59 carries the post-translational modification 4-carboxyglutamate. Position 71 is a 4-carboxyglutamate (E71). P76 bears the 4-hydroxyproline mark. Residues F78 to A80 constitute a propeptide that is removed on maturation.

Expressed by the venom duct.

The protein localises to the secreted. In terms of biological role, gamma-conotoxins may act on voltage-gated non-specific cation pacemaker channels (HCN). Triggers depolarization and firing of action potential bursts in the caudodorsal neurons of lymnaea. This effect is due to activation or enhancement of a slow inward cation current that may underlie endogenous bursting activity of these neurons. The protein is Gamma-conotoxin PnVIIA of Conus pennaceus (Feathered cone).